The following is a 232-amino-acid chain: Small heat shock protein, chloroplastic (232 aa).

A compositionally biased stretch (polar residues) spans 1–25 (MAQSVSLSTIASPILSQKPGSSVKS). Disordered stretches follow at residues 1–35 (MAQSVSLSTIASPILSQKPGSSVKSTPPCMASFPL) and 48–81 (RAQAGGDGDNKDNSVEVHRVNKDDQGTAVERKPR). The transit peptide at 1–46 (MAQSVSLSTIASPILSQKPGSSVKSTPPCMASFPLRRQLPRLGLRN) directs the protein to the chloroplast. The segment covering 55 to 78 (GDNKDNSVEVHRVNKDDQGTAVER) has biased composition (basic and acidic residues). The sHSP domain occupies 124 to 232 (IGGGEIRVPW…ERTVIDVQIQ (109 aa)).

The protein belongs to the small heat shock protein (HSP20) family.

The protein resides in the plastid. The protein localises to the chloroplast. This is Small heat shock protein, chloroplastic (HSP21) from Pisum sativum (Garden pea).